Consider the following 517-residue polypeptide: ADP-ribosylation factor GTPase-activating protein 3 (517 aa).

The region spanning 10–126 (LTIFKRLRSV…IKALASQATR (117 aa)) is the Arf-GAP domain. Residues 25 to 48 (CFDCGAKNPSWASITYGVFLCIDC) form a C4-type zinc finger. Positions 139–200 (VPPSSPPPKE…EQGPSVEGLN (62 aa)) are disordered. Over residues 159–176 (EVSSTGWASAQPEPSLTP) the composition is skewed to polar residues. Ser231 is modified (phosphoserine). Residues 243-263 (NEIEKQAQAVDKMNAQEDLLS) adopt a coiled-coil conformation. Phosphoserine is present on residues Ser271 and Ser275. A compositionally biased stretch (basic and acidic residues) spans 291-305 (EKMNMSGKKKAESER). 2 disordered regions span residues 291–349 (EKMN…SDDS) and 362–422 (MELR…QKKF). Positions 312 to 333 (NSRSGISHSVTSDMQTIEQETP) are enriched in polar residues. Ser371 is subject to Phosphoserine. Residues 379–390 (YWKKETIKDTDP) are compositionally biased toward basic and acidic residues. 6 positions are modified to phosphoserine: Ser429, Ser452, Ser454, Ser456, Ser458, and Ser459.

Its subcellular location is the cytoplasm. The protein resides in the golgi apparatus membrane. With respect to regulation, GAP activity stimulated by phosphatidylinositol 4,5-bisphosphate (PIP2). Functionally, GTPase-activating protein (GAP) for ADP ribosylation factor 1 (ARF1). Hydrolysis of ARF1-bound GTP may lead to dissociation of coatomer from Golgi-derived membranes to allow fusion with target membranes. This Bos taurus (Bovine) protein is ADP-ribosylation factor GTPase-activating protein 3.